The following is an 816-amino-acid chain: Mitogen-activated protein kinase 7 (816 aa).

Residues 1–26 (MAEPLKEEDGEDGSAEPPGPVKAEPA) are disordered. Residue Ala-2 is modified to N-acetylalanine. The required for cytoplasmic targeting stretch occupies residues 2–77 (AEPLKEEDGE…VVSSARRRLT (76 aa)). Residues 55-347 (YEIIETIGNG…AAAALRHPFL (293 aa)) enclose the Protein kinase domain. Residues 61-69 (IGNGAYGVV) and Lys-84 each bind ATP. A required for binding to MAP2K5 region spans residues 78–139 (GQQVAIKKIP…FKSVYVVLDL (62 aa)). The tract at residues 140–406 (MESDLHQIIH…QQIRFQPSLQ (267 aa)) is necessary for oligomerization. The active-site Proton acceptor is Asp-182. The short motif at 219 to 221 (TEY) is the TXY element. Residues 406 to 737 (QPVASEPGCP…PVFSGTPKGS (332 aa)) form a disordered region. The tract at residues 407 to 806 (PVASEPGCPD…REIQMDSPML (400 aa)) is may not be required for kinase activity; required to stimulate MEF2C activity. 2 stretches are compositionally biased toward pro residues: residues 433–445 (SPPPAPPPCPGPA) and 454–463 (QPPPPVSEPA). The segment covering 476 to 486 (KAALKAALLKS) has biased composition (low complexity). Basic and acidic residues-rich tracts occupy residues 502-519 (PEPRKPVTAQERQREREE), 527-544 (RAKEREKRRQERERKERG), and 563-573 (DNDRSLLERWT). Positions 505-539 (RKPVTAQERQREREEKRRRRQERAKEREKRRQERE) match the Nuclear localization signal motif. Low complexity predominate over residues 578–587 (PAAPALTSVP). 2 stretches are compositionally biased toward pro residues: residues 588–610 (APAPAPTPTPTPVQPTSPPPGPV) and 628–655 (VPQPACPPPGPAPHPTGPPGPIPVPAPP). Low complexity predominate over residues 676–685 (PGSSTPGVLP). Over residues 686-695 (YFPPGLPPPD) the composition is skewed to pro residues. Positions 701 to 720 (QSSMSESPDVNLVTQQLSKS) are enriched in polar residues. The residue at position 720 (Ser-720) is a Phosphoserine. At Thr-733 the chain carries Phosphothreonine.

It belongs to the protein kinase superfamily. CMGC Ser/Thr protein kinase family. MAP kinase subfamily. In terms of assembly, interacts with MAP2K5. Forms oligomers. Interacts with MEF2A, MEF2C and MEF2D; the interaction phosphorylates the MEF2s and enhances transcriptional activity of MEF2A, MEF2C but not MEF2D. Interacts with SGK1. Preferentially interacts with PML isoform PML-4 but shows interaction also with its other isoforms: isoform PML-1, isoform PML-2, isoform PML-3 and isoform PML-6. Interacts (via N-terminal half) with HSP90AB1-CDC37 chaperone complex in resting cells; the interaction is MAP2K5-independent and prevents MAPK7 from ubiquitination and proteasomal degradation. Interacts with STUB1/CHIP; the interaction is enhanced in the presence of IGF1 or MAP2K5 and promotes STUB1/CHIP E3 ligase activity. The cofactor is Mg(2+). Dually phosphorylated on Thr-219 and Tyr-221, which activates the enzyme. Autophosphorylated in vitro on threonine and tyrosine residues when the C-terminal part of the kinase, which could have a regulatory role, is absent. As to expression, expressed in many adult tissues. Abundant in heart, placenta, lung, kidney and skeletal muscle. Not detectable in liver.

The protein resides in the cytoplasm. Its subcellular location is the nucleus. It localises to the PML body. The enzyme catalyses L-seryl-[protein] + ATP = O-phospho-L-seryl-[protein] + ADP + H(+). It catalyses the reaction L-threonyl-[protein] + ATP = O-phospho-L-threonyl-[protein] + ADP + H(+). Activated by tyrosine and threonine phosphorylation. Activated in response to hyperosmolarity, hydrogen peroxide, and epidermal growth factor (EGF). Functionally, plays a role in various cellular processes such as proliferation, differentiation and cell survival. The upstream activator of MAPK7 is the MAPK kinase MAP2K5. Upon activation, it translocates to the nucleus and phosphorylates various downstream targets including MEF2C. EGF activates MAPK7 through a Ras-independent and MAP2K5-dependent pathway. As part of the MAPK/ERK signaling pathway, acts as a negative regulator of apoptosis in cardiomyocytes via interaction with STUB1/CHIP and promotion of STUB1-mediated ubiquitination and degradation of ICER-type isoforms of CREM. May have a role in muscle cell differentiation. May be important for endothelial function and maintenance of blood vessel integrity. MAP2K5 and MAPK7 interact specifically with one another and not with MEK1/ERK1 or MEK2/ERK2 pathways. Phosphorylates SGK1 at Ser-78 and this is required for growth factor-induced cell cycle progression. Involved in the regulation of p53/TP53 by disrupting the PML-MDM2 interaction. This is Mitogen-activated protein kinase 7 (MAPK7) from Homo sapiens (Human).